Consider the following 254-residue polypeptide: Homeobox protein Nkx-6.3 (254 aa).

Disordered stretches follow at residues 112-140 (QDWR…RPTF) and 191-228 (KSAV…DPDS). Polar residues predominate over residues 120–129 (ALSSASNTEG). Positions 133–192 (KKHTRPTFTGHQIFALEKTFEQTKYLAGPERARLAFSLGMSESQVKVWFQNRRTKWRKKS) form a DNA-binding region, homeobox.

It localises to the nucleus. Its function is as follows. Putative transcription factor, which may be involved in patterning of central nervous system and pancreas. The sequence is that of Homeobox protein Nkx-6.3 (nkx6-3) from Xenopus laevis (African clawed frog).